The following is a 272-amino-acid chain: Phosphoglycolate phosphatase (272 aa).

Residue Asp-19 is the Nucleophile of the active site. The Mg(2+) site is built by Asp-19, Asp-21, and Asp-182.

This sequence belongs to the HAD-like hydrolase superfamily. CbbY/CbbZ/Gph/YieH family. Requires Mg(2+) as cofactor.

It catalyses the reaction 2-phosphoglycolate + H2O = glycolate + phosphate. It participates in organic acid metabolism; glycolate biosynthesis; glycolate from 2-phosphoglycolate: step 1/1. Its function is as follows. Specifically catalyzes the dephosphorylation of 2-phosphoglycolate. Is involved in the dissimilation of the intracellular 2-phosphoglycolate formed during the DNA repair of 3'-phosphoglycolate ends, a major class of DNA lesions induced by oxidative stress. This chain is Phosphoglycolate phosphatase, found in Pseudomonas syringae pv. tomato (strain ATCC BAA-871 / DC3000).